The primary structure comprises 562 residues: NAD-dependent malic enzyme (562 aa).

Y101 (proton donor) is an active-site residue. R154 is an NAD(+) binding site. The Proton acceptor role is filled by K172. E243, D244, and D267 together coordinate a divalent metal cation. Residues D267 and N415 each coordinate NAD(+).

The protein belongs to the malic enzymes family. Homotetramer. The cofactor is Mg(2+). Mn(2+) serves as cofactor.

The enzyme catalyses (S)-malate + NAD(+) = pyruvate + CO2 + NADH. The catalysed reaction is oxaloacetate + H(+) = pyruvate + CO2. This is NAD-dependent malic enzyme from Aliivibrio salmonicida (strain LFI1238) (Vibrio salmonicida (strain LFI1238)).